Here is a 418-residue protein sequence, read N- to C-terminus: MNIFEELKARGLVFQTTDEEALVKALTEGQVSYYTGYDPTADSLHLGHLVAILTSRRLQLAGHKPYALVGGATGLIGDPSFKDAERILQTKETVLDWSQKIKEQLSCFLDFDNGENKAELVNNYDWFSQISFIDFLRDVGKHFTVNYMMSKDSVKKRIETGISYTEFAYQVMQGYDFYELNAKHNVTLQIGGSDQWGNMTAGTELLRKKADKTGHVMTVPLITDATGKKFGKSEGNAIWLDAKKTSPYEMYQFWLNVMDDDAVRFLKIFTFLSLDEIAAIEEQFNAARHERLAQKTLAREVVTLVHGEAAYQQALNITEQLFAGAIKNLSAAELKQGLSNVPNYQVQAEDSLNIVDMLVTAGISPSKRQAREDLQNGAIYLNGERLQNLDYSLSTADRIDNQLTVIRRGKKKYAVLTY.

Tyr-34 lines the L-tyrosine pocket. The 'HIGH' region signature appears at 39-48; sequence PTADSLHLGH. L-tyrosine-binding residues include Tyr-169 and Gln-173. A 'KMSKS' region motif is present at residues 229–233; it reads KFGKS. Lys-232 is an ATP binding site. One can recognise an S4 RNA-binding domain in the interval 352–418; that stretch reads LNIVDMLVTA…GKKKYAVLTY (67 aa).

The protein belongs to the class-I aminoacyl-tRNA synthetase family. TyrS type 1 subfamily. In terms of assembly, homodimer.

It localises to the cytoplasm. The enzyme catalyses tRNA(Tyr) + L-tyrosine + ATP = L-tyrosyl-tRNA(Tyr) + AMP + diphosphate + H(+). Catalyzes the attachment of tyrosine to tRNA(Tyr) in a two-step reaction: tyrosine is first activated by ATP to form Tyr-AMP and then transferred to the acceptor end of tRNA(Tyr). The protein is Tyrosine--tRNA ligase of Streptococcus equi subsp. zooepidemicus (strain H70).